A 148-amino-acid chain; its full sequence is Receptor activity-modifying protein 1 (148 aa).

Residues 1-26 form the signal peptide; it reads MAPGLRGLPRRGLWLLLAHHLFMVTA. Cystine bridges form between Cys-27/Cys-82, Cys-40/Cys-72, and Cys-57/Cys-104. Residues 27–118 are Extracellular-facing; that stretch reads CRDPDYGTLI…RALRDPPNSI (92 aa). Residues 119–140 form a helical membrane-spanning segment; sequence LCPFIVLPITVTLLMTALVVWR. Over 141 to 148 the chain is Cytoplasmic; sequence SKRTEGIV.

It belongs to the RAMP family. In terms of assembly, heterodimer of CALCRL and RAMP1; the interaction induces allosteric modulation of CALCRL function and CGRP1/CALCA and CGRP2/CALCB ligand specificity. Heterodimer of CALCR and RAMP1; interaction forms the AMYR1 receptor complex for amylin/IAPP and CGRP1/CALCA ligands.

It is found in the cell membrane. In terms of biological role, accessory protein that interacts with and modulates the function of G-protein coupled receptors including calcitonin gene-related peptide type 1 receptor (CALCRL) and calcitonin receptor (CALCR). Required for the transport of CALCRL to the plasma membrane. Together with CALCRL, form the receptor complex for the calcitonin gene-related peptides CGRP1/CALCA and CGRP2/CALCB. Together with CALCR, form the AMYR1 receptor complex for amylin/IAPP and CGRP1/CALCA. The sequence is that of Receptor activity-modifying protein 1 from Rattus norvegicus (Rat).